The chain runs to 236 residues: UPF0257 lipoprotein YnfC (236 aa).

The first 16 residues, 1 to 16, serve as a signal peptide directing secretion; that stretch reads MKKPLLLTLLCMILAG. C17 carries N-palmitoyl cysteine lipidation. A lipid anchor (S-diacylglycerol cysteine) is attached at C17.

Belongs to the UPF0257 family.

The protein resides in the cell membrane. In Salmonella typhi, this protein is UPF0257 lipoprotein YnfC.